The chain runs to 572 residues: Proline--tRNA ligase (572 aa).

Belongs to the class-II aminoacyl-tRNA synthetase family. ProS type 1 subfamily. Homodimer.

Its subcellular location is the cytoplasm. It catalyses the reaction tRNA(Pro) + L-proline + ATP = L-prolyl-tRNA(Pro) + AMP + diphosphate. Functionally, catalyzes the attachment of proline to tRNA(Pro) in a two-step reaction: proline is first activated by ATP to form Pro-AMP and then transferred to the acceptor end of tRNA(Pro). As ProRS can inadvertently accommodate and process non-cognate amino acids such as alanine and cysteine, to avoid such errors it has two additional distinct editing activities against alanine. One activity is designated as 'pretransfer' editing and involves the tRNA(Pro)-independent hydrolysis of activated Ala-AMP. The other activity is designated 'posttransfer' editing and involves deacylation of mischarged Ala-tRNA(Pro). The misacylated Cys-tRNA(Pro) is not edited by ProRS. This chain is Proline--tRNA ligase, found in Klebsiella pneumoniae subsp. pneumoniae (strain ATCC 700721 / MGH 78578).